A 115-amino-acid chain; its full sequence is Rubredoxin (115 aa).

Residues 15 to 66 form the Rubredoxin-like domain; that stretch reads SPNHECRACGYVYIPSQGDQKTSVSPGTPFEALPLNWKCPVCGAPRNYFIST. Residues C20, C23, C53, and C56 each coordinate Fe cation.

This sequence belongs to the rubredoxin family. The cofactor is Fe(3+).

Rubredoxin is a small nonheme, iron protein lacking acid-labile sulfide. Its single Fe, chelated to 4 Cys, functions as an electron acceptor and may also stabilize the conformation of the molecule. Could be involved in hydrogenase-linked redox processes. This Synechocystis sp. (strain ATCC 27184 / PCC 6803 / Kazusa) protein is Rubredoxin (rub).